The chain runs to 425 residues: Glutamyl-tRNA reductase (425 aa).

Substrate-binding positions include 49–52, Ser-107, 112–114, and Gln-118; these read TCNR and EPQ. Cys-50 (nucleophile) is an active-site residue. An NADP(+)-binding site is contributed by 187 to 192; sequence GAGETI.

Belongs to the glutamyl-tRNA reductase family. As to quaternary structure, homodimer.

The enzyme catalyses (S)-4-amino-5-oxopentanoate + tRNA(Glu) + NADP(+) = L-glutamyl-tRNA(Glu) + NADPH + H(+). It participates in porphyrin-containing compound metabolism; protoporphyrin-IX biosynthesis; 5-aminolevulinate from L-glutamyl-tRNA(Glu): step 1/2. Functionally, catalyzes the NADPH-dependent reduction of glutamyl-tRNA(Glu) to glutamate 1-semialdehyde (GSA). The polypeptide is Glutamyl-tRNA reductase (Pseudomonas syringae pv. syringae (strain B728a)).